Reading from the N-terminus, the 141-residue chain is uncharacterized protein (141 aa).

Residues 114–134 traverse the membrane as a helical segment; the sequence is ILFTCYIQSFSLLISNFFIAI.

It localises to the membrane. This is an uncharacterized protein from Schizosaccharomyces pombe (strain 972 / ATCC 24843) (Fission yeast).